A 527-amino-acid polypeptide reads, in one-letter code: Sulfate adenylyltransferase (527 aa).

The interval Met1 to Tyr176 is N-terminal. Residues Asp177–Lys406 form a catalytic region. Residue Gln206 participates in sulfate binding. ATP contacts are provided by residues Gln206–Asn209 and Gly302–His305. Catalysis depends on residues Thr207, Arg208, and Asn209. Arg208 provides a ligand contact to sulfate. Residue Ala306 participates in sulfate binding. Position 344 (Val344) interacts with ATP. Residues Gln407–Tyr527 are required for oligomerization; adenylyl-sulfate kinase-like.

It belongs to the sulfate adenylyltransferase family. Homohexamer. Dimer of trimers.

Its subcellular location is the cytoplasm. It carries out the reaction sulfate + ATP + H(+) = adenosine 5'-phosphosulfate + diphosphate. The protein operates within sulfur metabolism; hydrogen sulfide biosynthesis; sulfite from sulfate: step 1/3. Catalyzes the first intracellular reaction of sulfate assimilation, forming adenosine-5'-phosphosulfate (APS) from inorganic sulfate and ATP. Plays an important role in sulfate activation as a component of the biosynthesis pathway of sulfur-containing amino acids. The protein is Sulfate adenylyltransferase of Candida albicans (strain SC5314 / ATCC MYA-2876) (Yeast).